Reading from the N-terminus, the 188-residue chain is dCTP deaminase (188 aa).

DCTP is bound by residues 111 to 116, 135 to 137, glutamine 156, tyrosine 170, and glutamine 180; these read KSTYAR and TLE. Glutamate 137 acts as the Proton donor/acceptor in catalysis.

It belongs to the dCTP deaminase family. Homotrimer.

It catalyses the reaction dCTP + H2O + H(+) = dUTP + NH4(+). It participates in pyrimidine metabolism; dUMP biosynthesis; dUMP from dCTP (dUTP route): step 1/2. Catalyzes the deamination of dCTP to dUTP. This is dCTP deaminase from Cupriavidus metallidurans (strain ATCC 43123 / DSM 2839 / NBRC 102507 / CH34) (Ralstonia metallidurans).